A 738-amino-acid polypeptide reads, in one-letter code: Phosphoribosylformylglycinamidine synthase subunit PurL (738 aa).

Residue His41 is part of the active site. Residues Tyr44 and Lys83 each coordinate ATP. Residue Glu85 participates in Mg(2+) binding. Substrate contacts are provided by residues 86–89 (SHNH) and Arg108. The active-site Proton acceptor is the His87. Asp109 contacts Mg(2+). Gln233 contributes to the substrate binding site. Residue Asp261 participates in Mg(2+) binding. Residue 305 to 307 (ESQ) coordinates substrate. Residues Asp490 and Gly527 each coordinate ATP. Asn528 serves as a coordination point for Mg(2+). Substrate is bound at residue Ser530.

Belongs to the FGAMS family. In terms of assembly, monomer. Part of the FGAM synthase complex composed of 1 PurL, 1 PurQ and 2 PurS subunits.

The protein localises to the cytoplasm. It catalyses the reaction N(2)-formyl-N(1)-(5-phospho-beta-D-ribosyl)glycinamide + L-glutamine + ATP + H2O = 2-formamido-N(1)-(5-O-phospho-beta-D-ribosyl)acetamidine + L-glutamate + ADP + phosphate + H(+). Its pathway is purine metabolism; IMP biosynthesis via de novo pathway; 5-amino-1-(5-phospho-D-ribosyl)imidazole from N(2)-formyl-N(1)-(5-phospho-D-ribosyl)glycinamide: step 1/2. In terms of biological role, part of the phosphoribosylformylglycinamidine synthase complex involved in the purines biosynthetic pathway. Catalyzes the ATP-dependent conversion of formylglycinamide ribonucleotide (FGAR) and glutamine to yield formylglycinamidine ribonucleotide (FGAM) and glutamate. The FGAM synthase complex is composed of three subunits. PurQ produces an ammonia molecule by converting glutamine to glutamate. PurL transfers the ammonia molecule to FGAR to form FGAM in an ATP-dependent manner. PurS interacts with PurQ and PurL and is thought to assist in the transfer of the ammonia molecule from PurQ to PurL. This chain is Phosphoribosylformylglycinamidine synthase subunit PurL, found in Alkaliphilus metalliredigens (strain QYMF).